The sequence spans 447 residues: Methionine aminopeptidase 2 (447 aa).

Positions 1 to 86 are disordered; that stretch reads MAGATEGEDT…KNKKKKKKKI (86 aa). Residues 8–32 show a composition bias toward basic and acidic residues; that stretch reads EDTKVIESKINELNIDKPKLEDNNE. A compositionally biased stretch (acidic residues) spans 43 to 60; sequence GGDDDDDKEDDDDNDEIT. A compositionally biased stretch (basic residues) spans 71–86; it reads KKKKKNKNKKKKKKKI. A substrate-binding site is contributed by histidine 198. Aspartate 218, aspartate 229, and histidine 300 together coordinate a divalent metal cation. Residue histidine 308 participates in substrate binding. Glutamate 333 and glutamate 428 together coordinate a divalent metal cation.

Belongs to the peptidase M24A family. Methionine aminopeptidase eukaryotic type 2 subfamily. It depends on Co(2+) as a cofactor. The cofactor is Zn(2+). Requires Mn(2+) as cofactor. Fe(2+) is required as a cofactor.

It is found in the cytoplasm. The enzyme catalyses Release of N-terminal amino acids, preferentially methionine, from peptides and arylamides.. Its function is as follows. Cotranslationally removes the N-terminal methionine from nascent proteins. The N-terminal methionine is often cleaved when the second residue in the primary sequence is small and uncharged (Met-Ala-, Cys, Gly, Pro, Ser, Thr, or Val). The chain is Methionine aminopeptidase 2 from Candida albicans (strain WO-1) (Yeast).